Reading from the N-terminus, the 304-residue chain is Cell surface-binding protein OPG105 (304 aa).

An Alpha-carbonic anhydrase domain is found at 1-235 (MSQQLSPINI…NDDTEVYYSG (235 aa)). The Virion surface segment spans residues 1 to 275 (MSQQLSPINI…YQKYIEGNKT (275 aa)). The chain crosses the membrane as a helical span at residues 276–294 (FAIIAIVFVYILTAILFLM). The Intravirion segment spans residues 295–304 (SRRYSREKQN).

The protein belongs to the alpha-carbonic anhydrase family. Homodimer; disulfide-linked. Apparently non-glycosylated.

The protein localises to the virion membrane. Its function is as follows. Binds to chondroitin sulfate on the cell surface to provide virion attachment to target cell. The chain is Cell surface-binding protein OPG105 (OPG105) from Homo sapiens (Human).